A 335-amino-acid polypeptide reads, in one-letter code: Serine protease 42 (335 aa).

Positions 1–24 (MASGGGSLGLIVFLLLLQPKPCEA) are cleaved as a signal peptide. N-linked (GlcNAc...) asparagine glycosylation occurs at N67. Residues 79 to 315 (IMGGVDAEEG…YSKWLIAVVN (237 aa)) enclose the Peptidase S1 domain. A disulfide bridge connects residues C104 and C120. Residue H119 is the Charge relay system of the active site. A glycan (N-linked (GlcNAc...) asparagine) is linked at N140. D165 (charge relay system) is an active-site residue. A glycan (N-linked (GlcNAc...) asparagine) is linked at N176. Cystine bridges form between C199–C273, C232–C253, and C263–C291. Catalysis depends on S267, which acts as the Charge relay system.

Belongs to the peptidase S1 family. In terms of tissue distribution, testis-specific. Mainly detected in round spermatids at all the eminiferous epithelial stages (at protein level).

It is found in the cytoplasm. It localises to the cell membrane. Its function is as follows. Plays a role in spermatogenesis. Involved in germ cell survival during meiosis. Lacks protease activity in vitro. This is Serine protease 42 from Mus musculus (Mouse).